Consider the following 252-residue polypeptide: Ribosomal RNA small subunit methyltransferase J (252 aa).

Residues 101–102 (RD), 117–118 (ER), 153–154 (SS), and Asp171 each bind S-adenosyl-L-methionine.

The protein belongs to the methyltransferase superfamily. RsmJ family.

Its subcellular location is the cytoplasm. It carries out the reaction guanosine(1516) in 16S rRNA + S-adenosyl-L-methionine = N(2)-methylguanosine(1516) in 16S rRNA + S-adenosyl-L-homocysteine + H(+). In terms of biological role, specifically methylates the guanosine in position 1516 of 16S rRNA. This chain is Ribosomal RNA small subunit methyltransferase J, found in Salmonella choleraesuis (strain SC-B67).